Consider the following 392-residue polypeptide: Aspartate aminotransferase (392 aa).

3 residues coordinate L-aspartate: Gly-40, Trp-126, and Asn-176. Lys-239 carries the N6-(pyridoxal phosphate)lysine modification.

Belongs to the class-I pyridoxal-phosphate-dependent aminotransferase family. As to quaternary structure, homodimer. Requires pyridoxal 5'-phosphate as cofactor.

The protein resides in the cytoplasm. It catalyses the reaction L-aspartate + 2-oxoglutarate = oxaloacetate + L-glutamate. The polypeptide is Aspartate aminotransferase (Bacillus sp. (strain YM-2)).